The sequence spans 589 residues: MGGPAYDCLTNPLGAVRFSFVNALSSGYDPASSVGKDWGVVDLFRHYFSDESAISQVPILDSSSIKWVQPKTLVRFRGMIQDMLGNEFYAGAYKDDSTWRTNKYSDVSQFPEGSSTEIQVWERRLLYCVPVPGKNQWTECSSQELKNRFLDLTGQNREKRVRVDEEMTDSMDSSTLEAGRNGSPFKKMKVGEATSSASESQVPQTSGIPPATSADSLPCLVKIYDSPESDLKLNDVVEFLGVLTFDPIVMMDTDTLDENSDALSEAESVQMPSGKVPRLHCLIHRKLETQHFLHGSSLLPEPKSPQIFKEIRESLMKYLTGLLGNDHIAAQFLLLHLLSKVHGRVDNVAVGKLSLNLIHLNKESMSIFGTQLSGALKSLLPFTQSIPLTIEYLNTASFGPKKDYGINRLMPGVLQIADGTHLILDETELQPGTLNSVGVENANLLKNLLECQKVEYDFQYYKMEMATDVQMLIFSEGKSNIMPADLVLPLQPSQVNSLEVITPETAETWRCYLATCKSLSHSIGQELQQVVENDLVAARQTDRSLGSQDLSRLLTMARMMSVSYGETTLSLEHWQMVLELERLRKERLK.

Positions 163-211 (VDEEMTDSMDSSTLEAGRNGSPFKKMKVGEATSSASESQVPQTSGIPPA) are disordered. The span at 193 to 207 (ATSSASESQVPQTSG) shows a compositional bias: polar residues.

This sequence belongs to the MCMBP family. As to quaternary structure, interacts with the MCM complex.

The protein localises to the nucleus. Its function is as follows. Associated component of the MCM complex that acts as a regulator of DNA replication. Binds to the MCM complex during late S phase and may act by promoting the disassembly of the MCM complex from chromatin. Required for sister chromatid cohesion. The chain is Mini-chromosome maintenance complex-binding protein (ETG1) from Arabidopsis thaliana (Mouse-ear cress).